The chain runs to 278 residues: Sulfur carrier protein FdhD (278 aa).

Catalysis depends on Cys121, which acts as the Cysteine persulfide intermediate. Residue 260-265 (FCKPGR) coordinates Mo-bis(molybdopterin guanine dinucleotide).

Belongs to the FdhD family.

The protein localises to the cytoplasm. Required for formate dehydrogenase (FDH) activity. Acts as a sulfur carrier protein that transfers sulfur from IscS to the molybdenum cofactor prior to its insertion into FDH. The protein is Sulfur carrier protein FdhD of Salmonella paratyphi A (strain ATCC 9150 / SARB42).